Reading from the N-terminus, the 235-residue chain is Retron Ec48 transmembrane protein (235 aa).

Helical transmembrane passes span 11 to 31 (IVGVSSALFLIFSLISLFETI) and 64 to 84 (AFGWLITTFVTVFGVMIALMT).

Its subcellular location is the cell inner membrane. Its function is as follows. Membrane component of antiviral defense system Retron Ec48, composed of a non-coding RNA (ncRNA), a reverse transcriptase (RT) and this membrane protein. Expression of this retron confers protection against bacteriophages lambda, T2, T4, T5 and T7. At multiplicity of infection (MOI) of 0.02 cultures grow normally when infected with lambda without collapsing, at MOI 2 cultures enter growth stasis. At MOI 3 cell membranes are permeabilized within 15 minutes of infection but do not lyse, suggesting the phage are not able to finish a replication cycle. Antiviral defense is suppressed by mutations that knockout the lambda gam expression or phage T7 gp5.9 expression; both viral genes inhibit host RecBCD. The Ec48 retron may sense the integrity of the RecBCD enzyme; when RecBCD is perturbed by viral proteins the Ec48 effector (the membrane protein) is activated, leading to abortive infection and bacterial growth arrest. The protein is Retron Ec48 transmembrane protein of Escherichia coli.